Reading from the N-terminus, the 397-residue chain is Elongation factor Tu (397 aa).

The tr-type G domain maps to 10–207 (KPHVNIGTIG…VLDEYVKEPV (198 aa)). Residues 19–26 (GHIDHGKT) form a G1 region. 19-26 (GHIDHGKT) contributes to the GTP binding site. Thr26 contributes to the Mg(2+) binding site. A G2 region spans residues 60–64 (GITIS). The interval 81-84 (DCPG) is G3. GTP contacts are provided by residues 81–85 (DCPGH) and 136–139 (NKCD). The interval 136–139 (NKCD) is G4. The interval 174 to 176 (SAL) is G5.

Belongs to the TRAFAC class translation factor GTPase superfamily. Classic translation factor GTPase family. EF-Tu/EF-1A subfamily. In terms of assembly, monomer.

The protein resides in the cytoplasm. The enzyme catalyses GTP + H2O = GDP + phosphate + H(+). Its function is as follows. GTP hydrolase that promotes the GTP-dependent binding of aminoacyl-tRNA to the A-site of ribosomes during protein biosynthesis. This chain is Elongation factor Tu, found in Desulforapulum autotrophicum (strain ATCC 43914 / DSM 3382 / VKM B-1955 / HRM2) (Desulfobacterium autotrophicum).